Here is a 144-residue protein sequence, read N- to C-terminus: Large ribosomal subunit protein uL16 (144 aa).

It belongs to the universal ribosomal protein uL16 family. In terms of assembly, part of the 50S ribosomal subunit.

Its function is as follows. Binds 23S rRNA and is also seen to make contacts with the A and possibly P site tRNAs. The sequence is that of Large ribosomal subunit protein uL16 from Clostridium beijerinckii (strain ATCC 51743 / NCIMB 8052) (Clostridium acetobutylicum).